We begin with the raw amino-acid sequence, 217 residues long: GrpE protein homolog 1, mitochondrial (217 aa).

Residues 1-27 (MAARCVRLARRSLPALALSFRPSPRLL) constitute a mitochondrion transit peptide. The segment at 37-56 (GQNLDEDLGHCEPKTDPPSA) is disordered. Lysine 94 carries the N6-acetyllysine; alternate modification. Residue lysine 94 is modified to N6-succinyllysine; alternate. The residue at position 100 (lysine 100) is an N6-acetyllysine. Lysine 120 carries the N6-succinyllysine modification. Lysine 215 is subject to N6-acetyllysine; alternate. Lysine 215 is modified (N6-succinyllysine; alternate).

It belongs to the GrpE family. As to quaternary structure, probable component of the PAM complex at least composed of a mitochondrial HSP70 protein, GRPEL1 or GRPEL2, TIMM44, TIMM16/PAM16 and TIMM14/DNAJC19. Binds to HSP70, HSC70 and HSJ1B.

Its subcellular location is the mitochondrion matrix. In terms of biological role, essential component of the PAM complex, a complex required for the translocation of transit peptide-containing proteins from the inner membrane into the mitochondrial matrix in an ATP-dependent manner. Seems to control the nucleotide-dependent binding of mitochondrial HSP70 to substrate proteins. In Mus musculus (Mouse), this protein is GrpE protein homolog 1, mitochondrial (Grpel1).